Reading from the N-terminus, the 126-residue chain is Protein ApaG (126 aa).

An ApaG domain is found at 2–126 (SQVESPIKIK…FRLAVPGIFQ (125 aa)).

The polypeptide is Protein ApaG (Shewanella frigidimarina (strain NCIMB 400)).